A 90-amino-acid polypeptide reads, in one-letter code: DNA/RNA-binding protein Alba (90 aa).

Residue Lys-11 is modified to N6-acetyllysine.

It belongs to the histone-like Alba family. Post-translationally, acetylated. Acetylation at Lys-11 decreases DNA-binding affinity.

It is found in the cytoplasm. Its subcellular location is the chromosome. Binds double-stranded DNA tightly but without sequence specificity. Involved in DNA compaction. This is DNA/RNA-binding protein Alba from Picrophilus torridus (strain ATCC 700027 / DSM 9790 / JCM 10055 / NBRC 100828 / KAW 2/3).